The primary structure comprises 361 residues: MAGNSIGQFFRVTTFGESHGIALGCIIDGVPPGIPITEADIQLDLDRRRPGTSRYTTQRREPDQVRILSGIFEGVTTGTSIGLMIENTDQRSQDYSAIKDVFRPGHADYTYEQKYGVRDYRGGGRSSARETAMRVAAGAIAKKYLAQKFGVQVRGYLAQIGDISCDVVDWDQVEQNPFFCPDASKLESLDALMRELKKAGDSIGAKITVVAEHVPVGLGEPVFDRLDADLAHALMSINAVKGVEIGDGFAVVTKRGSENRDEITPQGFQSNHAGGILGGISSGQPVVAHIALKPTSSITVPGQTINRQGEAVEMITRGRHDPCVGIRAVPIAEAMMAIVLMDHLLRQRAQCGDVVSDVPRW.

Residues Arg48 and Arg54 each coordinate NADP(+). FMN-binding positions include 125-127, 238-239, Gly278, 293-297, and Arg319; these read RSS, NA, and KPTSS.

The protein belongs to the chorismate synthase family. In terms of assembly, homotetramer. It depends on FMNH2 as a cofactor.

It catalyses the reaction 5-O-(1-carboxyvinyl)-3-phosphoshikimate = chorismate + phosphate. It functions in the pathway metabolic intermediate biosynthesis; chorismate biosynthesis; chorismate from D-erythrose 4-phosphate and phosphoenolpyruvate: step 7/7. Functionally, catalyzes the anti-1,4-elimination of the C-3 phosphate and the C-6 proR hydrogen from 5-enolpyruvylshikimate-3-phosphate (EPSP) to yield chorismate, which is the branch point compound that serves as the starting substrate for the three terminal pathways of aromatic amino acid biosynthesis. This reaction introduces a second double bond into the aromatic ring system. The sequence is that of Chorismate synthase from Yersinia enterocolitica serotype O:8 / biotype 1B (strain NCTC 13174 / 8081).